A 189-amino-acid polypeptide reads, in one-letter code: Chitin synthase 2 (189 aa).

This sequence belongs to the chitin synthase family. Class II subfamily.

It localises to the cell membrane. It catalyses the reaction [(1-&gt;4)-N-acetyl-beta-D-glucosaminyl](n) + UDP-N-acetyl-alpha-D-glucosamine = [(1-&gt;4)-N-acetyl-beta-D-glucosaminyl](n+1) + UDP + H(+). In terms of biological role, polymerizes chitin, a structural polymer of the cell wall and septum, by transferring the sugar moiety of UDP-GlcNAc to the non-reducing end of the growing chitin polymer. This chain is Chitin synthase 2 (chs2), found in Aspergillus niger.